The primary structure comprises 259 residues: Chaplin-C (259 aa).

Residues 1–28 (MRQATRKGLMTMAAATGVIAAAGGAAHA) form the signal peptide. The region spanning 39–79 (SPGVLSGNTVQAPVHVPVNVCGNTVDVVGVLNPAMGNACAN) is the Chaplin 1 domain. Over residues 84–112 (ASGGHGGHGGHGGYGDSGGEGGSHGGSHA) the composition is skewed to gly residues. Disordered stretches follow at residues 84-129 (ASGG…NHVE) and 154-227 (GNDC…ALAE). The region spanning 119–159 (SPGVGSGNHVEVPIDVPVNVCGNSIDVVGALNPTTGNDCGN) is the Chaplin 2 domain. Positions 180-189 (HNPGNPGNPD) are enriched in low complexity. The LPXTG sorting signal motif lies at 225–229 (LAETG). Residue T228 is modified to Pentaglycyl murein peptidoglycan amidated threonine. Residues 229–259 (GSDLPLGLALPVGAGALLAGTVLYRKARASV) constitute a propeptide, removed by sortase.

This sequence belongs to the chaplin family. Long chaplin subfamily.

The protein resides in the secreted. The protein localises to the cell wall. One of 8 partially redundant surface-active proteins required for efficient formation of aerial mycelium; the short chaplins assemble into a hydrophobic, amyloidal fibrillar surface layer that envelopes and protects aerial hyphae and spores, presumably anchored to the long chaplins. Chaplins have an overlapping function with the surface-active SapB peptide; chaplins are essential on minimal medium while on rich medium both chaplins and SapB are required for efficient aerial hyphae formation. A minimal chaplin strain capable of forming aerial mycelium/hyphae on minimal medium contains ChpC, ChpE and ChpH. The strain also has restored rodlet formation on the hyphae surface. The long chaplins (ChpA, ChpB, ChpC) are not absolutely necessary for short chaplin localization or rodlet formation, but probably play a role in initiating aerial hyphae development. Chaplins are also involved in cell attachment to a hydrophobic surface. The protein is Chaplin-C of Streptomyces coelicolor (strain ATCC BAA-471 / A3(2) / M145).